The sequence spans 146 residues: Large ribosomal subunit protein bL19 (146 aa).

The segment at 119 to 146 (DYRKKGEKGVEKVETTPVSADIETQVAE) is disordered.

It belongs to the bacterial ribosomal protein bL19 family.

This protein is located at the 30S-50S ribosomal subunit interface and may play a role in the structure and function of the aminoacyl-tRNA binding site. In Bartonella tribocorum (strain CIP 105476 / IBS 506), this protein is Large ribosomal subunit protein bL19.